Consider the following 358-residue polypeptide: ATP synthase gamma chain, chloroplastic (358 aa).

The N-terminal 35 residues, 1-35 (MAAMLASKQGAFMGRSSFAPAPKGVASRGSLQVVA), are a transit peptide targeting the chloroplast. Cys123 is a catalytic residue. A disulfide bridge links Cys233 with Cys239.

The protein belongs to the ATPase gamma chain family. F-type ATPases have 2 components, F(1) - the catalytic core - and F(0) - the membrane proton channel. F(1) has five subunits: alpha(3), beta(3), gamma(1), delta(1), epsilon(1). F(0) has four main subunits: a(1), b(1), b'(1) and c(10-14). The alpha and beta chains form an alternating ring which encloses part of the gamma chain. F(1) is attached to F(0) by a central stalk formed by the gamma and epsilon chains, while a peripheral stalk is formed by the delta, b and b' chains.

The protein localises to the plastid. The protein resides in the chloroplast thylakoid membrane. Its function is as follows. F(1)F(0) ATP synthase produces ATP from ADP in the presence of a proton or sodium gradient. F-type ATPases consist of two structural domains, F(1) containing the extramembraneous catalytic core and F(0) containing the membrane proton channel, linked together by a central stalk and a peripheral stalk. During catalysis, ATP synthesis in the catalytic domain of F(1) is coupled via a rotary mechanism of the central stalk subunits to proton translocation. Functionally, produces ATP from ADP in the presence of a proton gradient across the membrane. The gamma chain is believed to be important in regulating ATPase activity and the flow of protons through the CF(0) complex. This is ATP synthase gamma chain, chloroplastic from Chlamydomonas reinhardtii (Chlamydomonas smithii).